A 185-amino-acid polypeptide reads, in one-letter code: UPF0301 protein PSHAa2600 (185 aa).

This sequence belongs to the UPF0301 (AlgH) family.

The polypeptide is UPF0301 protein PSHAa2600 (Pseudoalteromonas translucida (strain TAC 125)).